The chain runs to 345 residues: Dihydroorotase (345 aa).

The Zn(2+) site is built by H13 and H15. Residues 15–17 and N41 contribute to the substrate site; that span reads HFR. The Zn(2+) site is built by K98, H135, and H173. An N6-carboxylysine modification is found at K98. H135 is a binding site for substrate. A substrate-binding site is contributed by L218. Residue D246 participates in Zn(2+) binding. D246 is an active-site residue. Positions 250 and 262 each coordinate substrate.

This sequence belongs to the metallo-dependent hydrolases superfamily. DHOase family. Class II DHOase subfamily. Homodimer. Zn(2+) serves as cofactor.

It carries out the reaction (S)-dihydroorotate + H2O = N-carbamoyl-L-aspartate + H(+). It participates in pyrimidine metabolism; UMP biosynthesis via de novo pathway; (S)-dihydroorotate from bicarbonate: step 3/3. Its function is as follows. Catalyzes the reversible cyclization of carbamoyl aspartate to dihydroorotate. This Shewanella halifaxensis (strain HAW-EB4) protein is Dihydroorotase.